We begin with the raw amino-acid sequence, 594 residues long: Sodium-dependent glucose transporter 1 (594 aa).

11 helical membrane passes run 77–97, 115–137, 144–161, 166–186, 205–225, 269–289, 311–331, 349–371, 393–413, 439–459, and 467–487; these read WLVS…ISVL, LSYI…GILF, LLLG…SGTP, AWVL…LDTG, ALHF…KLLF, IVIG…YFCI, TLII…VAYG, AAGL…IFFA, LLCL…LYGI, IFVV…GFLL, and LLMY…PVLY.

Belongs to the major facilitator superfamily.

Its subcellular location is the apical cell membrane. May function as a sodium-dependent glucose transporter. Potential channels for urea in the inner medulla of kidney. The chain is Sodium-dependent glucose transporter 1 (mfsd4b) from Danio rerio (Zebrafish).